A 383-amino-acid polypeptide reads, in one-letter code: Cytochrome b (383 aa).

4 helical membrane-spanning segments follow: residues 32 to 52 (VGSL…FLAM), 76 to 98 (WLMR…LHMG), 113 to 133 (VWSM…MGYC), and 179 to 199 (FFAL…MHFM). 2 residues coordinate heme b: His82 and His96. Heme b-binding residues include His183 and His197. A ubiquinone is bound at residue His202. Transmembrane regions (helical) follow at residues 225-245 (FVFK…LFVF), 289-309 (LGGV…PMTD), 321-341 (LSKL…NMGQ), and 348-368 (FIEL…MLVP).

This sequence belongs to the cytochrome b family. Fungal cytochrome b-c1 complex contains 10 subunits; 3 respiratory subunits, 2 core proteins and 5 low-molecular weight proteins. Cytochrome b-c1 complex is a homodimer. Requires heme b as cofactor.

It localises to the mitochondrion inner membrane. Its function is as follows. Component of the ubiquinol-cytochrome c reductase complex (complex III or cytochrome b-c1 complex) that is part of the mitochondrial respiratory chain. The b-c1 complex mediates electron transfer from ubiquinol to cytochrome c. Contributes to the generation of a proton gradient across the mitochondrial membrane that is then used for ATP synthesis. The protein is Cytochrome b (COB) of Debaryomyces hansenii (strain ATCC 36239 / CBS 767 / BCRC 21394 / JCM 1990 / NBRC 0083 / IGC 2968) (Yeast).